The sequence spans 254 residues: Putative ankyrin-containing lipoprotein Lxx09580 (254 aa).

Residues 1–22 (MTEIRYVRLLTLVLASSVLLAG) form the signal peptide. Residue Cys23 is the site of N-palmitoyl cysteine attachment. Cys23 carries the S-diacylglycerol cysteine lipid modification. 5 ANK repeats span residues 56–85 (AATASLHAAARSGDAEAVRSALAAGAAIED), 89–118 (GGRTPLVEAAKGNHVEAARALIEAGADVNA), 122–151 (IQDSAYLYAGAEGYLEILRMTLTTGADVNA), 155–184 (FNGTALIPASEHAHTEVVRMLIAAGVDLDH), and 188–222 (PGWTAMQEAIVLGNGGAGAQDVVRQLLAAGANPDI).

It is found in the cell membrane. The sequence is that of Putative ankyrin-containing lipoprotein Lxx09580 from Leifsonia xyli subsp. xyli (strain CTCB07).